We begin with the raw amino-acid sequence, 806 residues long: Zygotic DNA replication licensing factor mcm3 (806 aa).

The MCM domain maps to V295–L502. G345–S352 provides a ligand contact to ATP. An Arginine finger motif is present at residues S477 to D480. The disordered stretch occupies residues K662–S738. Over residues A693–Y702 the composition is skewed to basic and acidic residues.

It belongs to the MCM family. In terms of assembly, component of the mcm2-7 complex (RLF-M). The complex forms a toroidal hexameric ring with the proposed subunit order mcm2-mcm6-mcm4-mcm7-mcm3-mcm5. Begins to associate with zmcm6 into mcm complexes at the neurula stage. Component of the CMG helicase complex, composed of the mcm2-7 complex, the GINS complex and cdc45.

The protein resides in the nucleus. Its subcellular location is the chromosome. The enzyme catalyses ATP + H2O = ADP + phosphate + H(+). Functionally, acts as a component of the mcm2-7 complex (mcm complex) which is the putative replicative helicase essential for 'once per cell cycle' DNA replication initiation and elongation in eukaryotic cells. The active ATPase sites in the mcm2-7 ring are formed through the interaction surfaces of two neighboring subunits such that a critical structure of a conserved arginine finger motif is provided in trans relative to the ATP-binding site of the Walker A box of the adjacent subunit. The six ATPase active sites, however, are likely to contribute differentially to the complex helicase activity. The existence of maternal and zygotic forms of mcm3 and mcm6 suggests that specific forms of mcm2-7 complexes may be used during different stages of development. This chain is Zygotic DNA replication licensing factor mcm3, found in Xenopus laevis (African clawed frog).